A 523-amino-acid chain; its full sequence is MTLQEEIKKRRTFAIISHPDAGKTTITEQLLKFGGAIREAGTVKARKTGNFAKSDWMDIEKERGISVTSSVMQFDYAGKRVNILDTPGHEDFSEDTYRTLMAVDAAVMVIDSAKGIEAQTKKLFQVVKRRGIPVFTFINKLDRDGREPLDLLSELEEILGIASVPMNWPIGMGKNFQGLYDFTHGRVEVYQPEDGKRFVEFDENGEVPTSHPLTKNPFFTQALEDAELLLDAGNQFSEDEVVAGQLTPVFFGSALTSFGVETFLETFLEYAPEPHSHKTVDEEEIEPLNPDFSGFIFKIQANMDPRHRDRIAFVRIVSGEFERGMDVNLVRTGKKVKLSNVTQFMAESRENVENAVAGDIIGVYDTGTYQVGDTLTTGKLKKSFEPLPTFTPELFMRVQAKNVMKQKSFQKGIDQLVQEGAIQLYKSYTTGDIMLGAVGQLQFEVFKDRMEREYNSETIMTPMGSKTVRWIKEEDLDEKMSSSRNILARDRFDHPLFLFENEFAMRWFKDKYPDIELMEQFSV.

The tr-type G domain maps to 8–275 (KKRRTFAIIS…TFLEYAPEPH (268 aa)). GTP-binding positions include 17-24 (SHPDAGKT), 85-89 (DTPGH), and 139-142 (NKLD).

It belongs to the TRAFAC class translation factor GTPase superfamily. Classic translation factor GTPase family. PrfC subfamily.

The protein localises to the cytoplasm. Increases the formation of ribosomal termination complexes and stimulates activities of RF-1 and RF-2. It binds guanine nucleotides and has strong preference for UGA stop codons. It may interact directly with the ribosome. The stimulation of RF-1 and RF-2 is significantly reduced by GTP and GDP, but not by GMP. In Lactococcus lactis subsp. cremoris (strain SK11), this protein is Peptide chain release factor 3.